Here is a 296-residue protein sequence, read N- to C-terminus: LysM and putative peptidoglycan-binding domain-containing protein 4 (296 aa).

Over 1–217 the chain is Extracellular; sequence MRHKELLSKT…PMDGADCGIQ (217 aa). The N-linked (GlcNAc...) asparagine glycan is linked to Asn-30. A LysM domain is found at 74 to 118; sequence LQRELAQEDSLNKLALQYGCKVADIKKVNNFIREQDLYALKSIKS. The helical transmembrane segment at 218–238 threads the bilayer; it reads WWNAVFIMLLIGIVLPIFYLV. Residues 239 to 296 are Cytoplasmic-facing; the sequence is YFKIQASGETPNSLNTAAIPNGSMAMGTVPGQAPRLAVAVPTVPSADSQFSQTTQAGN.

It is found in the membrane. The chain is LysM and putative peptidoglycan-binding domain-containing protein 4 (LYSMD4) from Pongo abelii (Sumatran orangutan).